Reading from the N-terminus, the 225-residue chain is Cytidylate kinase (225 aa).

An ATP-binding site is contributed by 12 to 20 (GPSGAGKGT).

It belongs to the cytidylate kinase family. Type 1 subfamily.

It localises to the cytoplasm. The catalysed reaction is CMP + ATP = CDP + ADP. It carries out the reaction dCMP + ATP = dCDP + ADP. In Stenotrophomonas maltophilia (strain R551-3), this protein is Cytidylate kinase.